The following is a 319-amino-acid chain: Taste receptor type 2 member 39 (319 aa).

At 1-16 (MAQPSNYWKQDLLPLS) the chain is on the extracellular side. A helical transmembrane segment spans residues 17–37 (ILILTLVATECTIGIIASGII). Residues 38 to 56 (TVVNAVSWVQKRAVSITTR) are Cytoplasmic-facing. The chain crosses the membrane as a helical span at residues 57–77 (ILLLLSVSRIGLQSIILIEMT). The Extracellular segment spans residues 78 to 97 (SSIFNFSSYNSVLYRVSRVS). Residue N82 is glycosylated (N-linked (GlcNAc...) asparagine). The helical transmembrane segment at 98-118 (FVFLNYCSLWFAALLSFFHFV) threads the bilayer. The Cytoplasmic portion of the chain corresponds to 119–137 (KIANFSYPLFFKLKWRISE). Residues 138 to 158 (LMPWLLWLSVFISFSSSMFFC) traverse the membrane as a helical segment. Topologically, residues 159–187 (NHKYTVYNNISLSSNICNFTMELYVAEAN) are extracellular. N-linked (GlcNAc...) asparagine glycans are attached at residues N167 and N176. A helical membrane pass occupies residues 188-208 (VVNVAFLFSFGILPPLTMFIA). At 209–247 (TATLLIFSLRRHTLHMRNGDADSRNPRVEAHKQAIKETS) the chain is on the cytoplasmic side. A helical membrane pass occupies residues 248–268 (CFLFLYILYAAVLFLSTSNIA). At 269-273 (DASLF) the chain is on the extracellular side. A helical membrane pass occupies residues 274-294 (WSSVLRISLPVYPAGHSVLLI). Residues 295–319 (QSNPGLKRTWKQLLSQIHLHLQSRY) lie on the Cytoplasmic side of the membrane.

It belongs to the G-protein coupled receptor T2R family.

It is found in the membrane. Its function is as follows. Putative taste receptor which may play a role in the perception of bitterness. This chain is Taste receptor type 2 member 39, found in Rattus norvegicus (Rat).